Consider the following 115-residue polypeptide: MKLVHGIDIIEWNREELNNPLFAKRILIDNELEYYFQLNSSREKKRYLASVFACKEAVMKALKLKYGYGDILILKTENQRQVYLNKILIKELELSISYTETYIVASVVGLINNMN.

Mg(2+) is bound by residues D8 and E56.

The protein belongs to the P-Pant transferase superfamily. AcpS family. Mg(2+) is required as a cofactor.

It is found in the cytoplasm. The catalysed reaction is apo-[ACP] + CoA = holo-[ACP] + adenosine 3',5'-bisphosphate + H(+). Its function is as follows. Transfers the 4'-phosphopantetheine moiety from coenzyme A to a Ser of acyl-carrier-protein. In Ureaplasma parvum serovar 3 (strain ATCC 27815 / 27 / NCTC 11736), this protein is Holo-[acyl-carrier-protein] synthase.